A 365-amino-acid chain; its full sequence is Aminomethyltransferase (365 aa).

This sequence belongs to the GcvT family. In terms of assembly, the glycine cleavage system is composed of four proteins: P, T, L and H.

It catalyses the reaction N(6)-[(R)-S(8)-aminomethyldihydrolipoyl]-L-lysyl-[protein] + (6S)-5,6,7,8-tetrahydrofolate = N(6)-[(R)-dihydrolipoyl]-L-lysyl-[protein] + (6R)-5,10-methylene-5,6,7,8-tetrahydrofolate + NH4(+). Its function is as follows. The glycine cleavage system catalyzes the degradation of glycine. The chain is Aminomethyltransferase from Aeromonas hydrophila subsp. hydrophila (strain ATCC 7966 / DSM 30187 / BCRC 13018 / CCUG 14551 / JCM 1027 / KCTC 2358 / NCIMB 9240 / NCTC 8049).